Here is a 536-residue protein sequence, read N- to C-terminus: CTP synthase (536 aa).

The segment at 1–267 (MTKYIFVTGG…DQIVCDHLKL (267 aa)) is amidoligase domain. Ser13 contributes to the CTP binding site. Ser13 is a binding site for UTP. 14–19 (SIGKGI) serves as a coordination point for ATP. Tyr54 contacts L-glutamine. Asp71 is a binding site for ATP. Residues Asp71 and Glu141 each contribute to the Mg(2+) site. Residues 148 to 150 (DIE), 188 to 193 (KTKPTQ), and Lys224 each bind CTP. UTP contacts are provided by residues 188–193 (KTKPTQ) and Lys224. Positions 292-535 (KIALVGKYVE…ITAAVENSQA (244 aa)) constitute a Glutamine amidotransferase type-1 domain. Gly354 provides a ligand contact to L-glutamine. The active-site Nucleophile; for glutamine hydrolysis is Cys381. Residues 382–385 (LGMQ), Glu405, and Arg463 contribute to the L-glutamine site. Catalysis depends on residues His508 and Glu510.

Belongs to the CTP synthase family. As to quaternary structure, homotetramer.

The enzyme catalyses UTP + L-glutamine + ATP + H2O = CTP + L-glutamate + ADP + phosphate + 2 H(+). It carries out the reaction L-glutamine + H2O = L-glutamate + NH4(+). The catalysed reaction is UTP + NH4(+) + ATP = CTP + ADP + phosphate + 2 H(+). Its pathway is pyrimidine metabolism; CTP biosynthesis via de novo pathway; CTP from UDP: step 2/2. Its activity is regulated as follows. Allosterically activated by GTP, when glutamine is the substrate; GTP has no effect on the reaction when ammonia is the substrate. The allosteric effector GTP functions by stabilizing the protein conformation that binds the tetrahedral intermediate(s) formed during glutamine hydrolysis. Inhibited by the product CTP, via allosteric rather than competitive inhibition. Its function is as follows. Catalyzes the ATP-dependent amination of UTP to CTP with either L-glutamine or ammonia as the source of nitrogen. Regulates intracellular CTP levels through interactions with the four ribonucleotide triphosphates. The sequence is that of CTP synthase from Streptococcus mutans serotype c (strain ATCC 700610 / UA159).